We begin with the raw amino-acid sequence, 96 residues long: Co-chaperonin GroES (96 aa).

The protein belongs to the GroES chaperonin family. As to quaternary structure, heptamer of 7 subunits arranged in a ring. Interacts with the chaperonin GroEL.

The protein localises to the cytoplasm. Functionally, together with the chaperonin GroEL, plays an essential role in assisting protein folding. The GroEL-GroES system forms a nano-cage that allows encapsulation of the non-native substrate proteins and provides a physical environment optimized to promote and accelerate protein folding. GroES binds to the apical surface of the GroEL ring, thereby capping the opening of the GroEL channel. This chain is Co-chaperonin GroES, found in Shewanella loihica (strain ATCC BAA-1088 / PV-4).